Here is a 358-residue protein sequence, read N- to C-terminus: tRNA-specific 2-thiouridylase MnmA (358 aa).

Residues 8–15 (AMSGGVDS) and M35 contribute to the ATP site. The segment at 95–97 (NPD) is interaction with target base in tRNA. C100 acts as the Nucleophile in catalysis. Cysteines 100 and 194 form a disulfide. G124 contributes to the ATP binding site. An interaction with tRNA region spans residues 144 to 146 (KDQ). C194 functions as the Cysteine persulfide intermediate in the catalytic mechanism. The interval 301–302 (RY) is interaction with tRNA.

The protein belongs to the MnmA/TRMU family.

Its subcellular location is the cytoplasm. The enzyme catalyses S-sulfanyl-L-cysteinyl-[protein] + uridine(34) in tRNA + AH2 + ATP = 2-thiouridine(34) in tRNA + L-cysteinyl-[protein] + A + AMP + diphosphate + H(+). Catalyzes the 2-thiolation of uridine at the wobble position (U34) of tRNA, leading to the formation of s(2)U34. This Chlamydia trachomatis serovar L2 (strain ATCC VR-902B / DSM 19102 / 434/Bu) protein is tRNA-specific 2-thiouridylase MnmA.